The following is a 284-amino-acid chain: Probable O-methyltransferase ustE (284 aa).

Asparagine 22 and asparagine 29 each carry an N-linked (GlcNAc...) asparagine glycan. 2 helical membrane passes run 88–108 (LLLL…VLTV) and 157–177 (YLAT…VCEI). A glycan (N-linked (GlcNAc...) asparagine) is linked at asparagine 205. A helical membrane pass occupies residues 215–235 (GLALASGGMIYGMSIAMFFMW). A glycan (N-linked (GlcNAc...) asparagine) is linked at asparagine 264.

This sequence belongs to the class VI-like SAM-binding methyltransferase superfamily. Isoprenylcysteine carboxyl methyltransferase family.

The protein localises to the membrane. The protein operates within secondary metabolite biosynthesis. Functionally, probable O-methyltransferase; part of the gene cluster that mediates the biosynthesis of ustilaginoidins, dimeric gamma-naphthopyrones isolated from different fungal species. The first step in the biosynthesis of ustilaginoidins is the production of gamma-naphthopyrone precursor YWA1 by the non-reducing polyketide synthase ustP, via condensation of one acetyl-CoA starter unit with 6 malonyl-CoA units. YWA1 is then probably substrate of the ustZ to yield norrubrofusarin via a dehydration reaction. A key enzyme in the biosynthetic pathway is the laccase ustL, which catalyzes the oxidative dimerization of norrubrofusarin to ustilaginoidin A. It can produce the M- and P-atropisomers in varying amounts, depending on the reaction conditions. For the biosynthesis of 3-methylustilaginoid in derivatives such as chaetochromin A, a methylated derivative of YWA1 is required. The C-methylation is considered to be catalyzed by ustM, the phosphopantetheine attachment site of which indicates that it acts on the growing polyketide chain before release of the product. For the biosynthesis of chaetochromin A, it is assumed that saturation of the D2 double bond takes place before dimerization, and is probably catalyzed by an external reductase because no candidate gene was identified within the cluster. The chain is Probable O-methyltransferase ustE from Ustilaginoidea virens (Rice false smut fungus).